The primary structure comprises 599 residues: Afamin (599 aa).

The N-terminal stretch at 1–21 is a signal peptide; the sequence is MKLLKLTGFIFFLFFLTESLT. Albumin domains are found at residues 22–210, 211–403, and 404–599; these read LPTQ…IPVT, QYLK…KFNE, and TTEK…KIGN. The N-linked (GlcNAc...) (complex) asparagine glycan is linked to asparagine 33. Intrachain disulfides connect cysteine 77–cysteine 86, cysteine 99–cysteine 114, cysteine 113–cysteine 124, cysteine 148–cysteine 193, cysteine 192–cysteine 201, cysteine 224–cysteine 270, cysteine 269–cysteine 277, cysteine 289–cysteine 303, cysteine 302–cysteine 313, cysteine 340–cysteine 385, and cysteine 384–cysteine 393. N-linked (GlcNAc...) (complex) asparagine glycosylation is present at asparagine 109. The binding pocket for hydrophobic ligands stretch occupies residues 215–319; that stretch reads AFSSYQKHVC…RGQCIINSNK (105 aa). Residue asparagine 383 is glycosylated (N-linked (GlcNAc...) (complex) asparagine; atypical). An N-linked (GlcNAc...) (complex) asparagine glycan is attached at asparagine 402. Disulfide bonds link cysteine 416–cysteine 462, cysteine 461–cysteine 470, cysteine 483–cysteine 499, cysteine 498–cysteine 509, cysteine 536–cysteine 581, and cysteine 580–cysteine 589. N-linked (GlcNAc...) asparagine glycosylation is present at asparagine 488.

Belongs to the ALB/AFP/VDB family. Forms a 1:1 complex with Wnt family members; interacts with WNT1, WNT2B, WNT3, WNT3A, WNT5A, WNT7A, WNT7B, WNT8, WNT9A, WNT9B, WNT10A and WNT10B. Post-translationally, N-glycosylated; more than 90% of the glycans are sialylated. High level detected in plasma but also in extravascular fluids such as follicular and cerebrospinal fluids (at protein level).

The protein localises to the secreted. Functions as a carrier for hydrophobic molecules in body fluids. Essential for the solubility and activity of lipidated Wnt family members, including WNT1, WNT2B, WNT3, WNT3A, WNT5A, WNT7A, WNT7B, WNT8, WNT9A, WNT9B, WNT10A and WNT10B. Binds vitamin E. May transport vitamin E in body fluids under conditions where the lipoprotein system is not sufficient. May be involved in the transport of vitamin E across the blood-brain barrier. The sequence is that of Afamin (AFM) from Homo sapiens (Human).